Reading from the N-terminus, the 271-residue chain is 2,3,4,5-tetrahydropyridine-2,6-dicarboxylate N-succinyltransferase (271 aa).

It belongs to the transferase hexapeptide repeat family.

Its subcellular location is the cytoplasm. The catalysed reaction is (S)-2,3,4,5-tetrahydrodipicolinate + succinyl-CoA + H2O = (S)-2-succinylamino-6-oxoheptanedioate + CoA. Its pathway is amino-acid biosynthesis; L-lysine biosynthesis via DAP pathway; LL-2,6-diaminopimelate from (S)-tetrahydrodipicolinate (succinylase route): step 1/3. The chain is 2,3,4,5-tetrahydropyridine-2,6-dicarboxylate N-succinyltransferase from Coxiella burnetii (strain CbuG_Q212) (Coxiella burnetii (strain Q212)).